Here is a 163-residue protein sequence, read N- to C-terminus: UPF0303 protein SAV_5210 (163 aa).

It belongs to the UPF0303 family.

The polypeptide is UPF0303 protein SAV_5210 (Streptomyces avermitilis (strain ATCC 31267 / DSM 46492 / JCM 5070 / NBRC 14893 / NCIMB 12804 / NRRL 8165 / MA-4680)).